Consider the following 127-residue polypeptide: Small ribosomal subunit protein bS6 (127 aa).

A compositionally biased stretch (basic and acidic residues) spans 106–117; that stretch reads ERKAQSEKKEAE. The tract at residues 106 to 127 is disordered; that stretch reads ERKAQSEKKEAEVSEGEGGTEA. Residues 118 to 127 are compositionally biased toward acidic residues; that stretch reads VSEGEGGTEA.

It belongs to the bacterial ribosomal protein bS6 family.

Its function is as follows. Binds together with bS18 to 16S ribosomal RNA. The chain is Small ribosomal subunit protein bS6 from Thermotoga neapolitana (strain ATCC 49049 / DSM 4359 / NBRC 107923 / NS-E).